A 211-amino-acid polypeptide reads, in one-letter code: MITGKLITVEGPDGAGKTTVLEQLIPLLKQKVAQEILTTREPGGVAISEYIRELILDINHTAMDPKTELLLYIAARRQHLVEKVLPALEAGQLVFIDRFIDSSVAYQGAGRGLIKADIQWLNEFATDGLEPDLTLYFDVPSEIGLARINANQQREVNRLDLETIEIHQRVRKGYLALAKEHPKRIVTIDATKPLKEVVSVALEHVLALLLA.

11 to 18 lines the ATP pocket; it reads GPDGAGKT.

This sequence belongs to the thymidylate kinase family.

It carries out the reaction dTMP + ATP = dTDP + ADP. In terms of biological role, phosphorylation of dTMP to form dTDP in both de novo and salvage pathways of dTTP synthesis. The protein is Thymidylate kinase of Streptococcus pyogenes serotype M6 (strain ATCC BAA-946 / MGAS10394).